Consider the following 375-residue polypeptide: Methylthioribose-1-phosphate isomerase (375 aa).

Substrate is bound by residues 53–55, R90, and Q202; that span reads RGA. D243 acts as the Proton donor in catalysis. 253–254 provides a ligand contact to substrate; sequence NK.

This sequence belongs to the eIF-2B alpha/beta/delta subunits family. MtnA subfamily.

The catalysed reaction is 5-(methylsulfanyl)-alpha-D-ribose 1-phosphate = 5-(methylsulfanyl)-D-ribulose 1-phosphate. Its pathway is amino-acid biosynthesis; L-methionine biosynthesis via salvage pathway; L-methionine from S-methyl-5-thio-alpha-D-ribose 1-phosphate: step 1/6. In terms of biological role, catalyzes the interconversion of methylthioribose-1-phosphate (MTR-1-P) into methylthioribulose-1-phosphate (MTRu-1-P). In Rhodospirillum centenum (strain ATCC 51521 / SW), this protein is Methylthioribose-1-phosphate isomerase.